A 681-amino-acid polypeptide reads, in one-letter code: Secretion system apparatus protein SsaV (681 aa).

A run of 7 helical transmembrane segments spans residues 24 to 44 (MVLATVLLIAIVMMLLPLPTW), 48 to 68 (ILITINLMFSVILLLIAIYLS), 73 to 93 (LSVFPSLLLITTLYRLSLTIS), 118 to 138 (GNLTVGLVVFTIITIVQFIVI), 206 to 226 (TIAGIIVVLVNIIGGIIIAIV), 244 to 264 (IGDGLCGQIPSLLISLSAGII), and 295 to 315 (AVVLMLLALIPGFPFITLAFF).

The protein belongs to the FHIPEP (flagella/HR/invasion proteins export pore) family.

It is found in the cell inner membrane. Component of Salmonella pathogenicity island 2 (SPI-2) type III secretion system, required for secretion of some type III-secreted effectors including the SpvB exotoxin. This Salmonella typhimurium (strain 14028s / SGSC 2262) protein is Secretion system apparatus protein SsaV (ssaV).